A 75-amino-acid chain; its full sequence is Exodeoxyribonuclease 7 small subunit (75 aa).

Belongs to the XseB family. Heterooligomer composed of large and small subunits.

The protein resides in the cytoplasm. It carries out the reaction Exonucleolytic cleavage in either 5'- to 3'- or 3'- to 5'-direction to yield nucleoside 5'-phosphates.. In terms of biological role, bidirectionally degrades single-stranded DNA into large acid-insoluble oligonucleotides, which are then degraded further into small acid-soluble oligonucleotides. The sequence is that of Exodeoxyribonuclease 7 small subunit from Caldanaerobacter subterraneus subsp. tengcongensis (strain DSM 15242 / JCM 11007 / NBRC 100824 / MB4) (Thermoanaerobacter tengcongensis).